We begin with the raw amino-acid sequence, 862 residues long: Cytosolic carboxypeptidase 2 (862 aa).

Residues Tyr-359 to Cys-629 enclose the Peptidase M14 domain. Residues His-425, Glu-428, and His-521 each contribute to the Zn(2+) site. Glu-593 acts as the Proton donor/acceptor in catalysis. Disordered stretches follow at residues Ser-669 to Pro-692, Asn-704 to Gln-728, and Ser-750 to Ser-836. Over residues Ser-674 to Asp-689 the composition is skewed to low complexity. Residues Asn-711 to Lys-721 show a composition bias toward basic residues. Residues Ala-813–Leu-825 show a composition bias toward polar residues.

It belongs to the peptidase M14 family. In terms of assembly, interacts with RARRES1, KIF11 and MAPRE1. Zn(2+) serves as cofactor. Widely expressed. Expressed in tissues with motile cilia such as testis, lung and trachea. Also detected in brain, eye, muscle, pancreas, intestine, stomach, pituitary, spleen, adrenal and kidney. Expressed in mitral and granular cells in brain.

It is found in the cytoplasm. The protein localises to the cytosol. It localises to the cytoskeleton. The protein resides in the microtubule organizing center. Its subcellular location is the centrosome. It is found in the centriole. The protein localises to the cilium basal body. The catalysed reaction is (L-glutamyl)(n+1)-gamma-L-glutamyl-L-glutamyl-[protein] + H2O = (L-glutamyl)(n)-gamma-L-glutamyl-L-glutamyl-[protein] + L-glutamate. Inhibited by RARRES1. Functionally, metallocarboxypeptidase that mediates deglutamylation of tubulin and non-tubulin target proteins. Catalyzes the removal of polyglutamate side chains present on the gamma-carboxyl group of glutamate residues within the C-terminal tail of tubulin protein. Specifically cleaves tubulin long-side-chains, while it is not able to remove the branching point glutamate. Also catalyzes the removal of polyglutamate residues from the carboxy-terminus of non-tubulin proteins such as MYLK. The polypeptide is Cytosolic carboxypeptidase 2 (Mus musculus (Mouse)).